We begin with the raw amino-acid sequence, 416 residues long: Gap junction alpha-3 protein (416 aa).

The stretch at 2–15 (GDWSFLGRLLENAQ) is an intramembrane region. The Cytoplasmic segment spans residues 16 to 19 (EHST). A helical membrane pass occupies residues 20–40 (VIGKVWLTVLFIFRILVLGAA). At 41 to 71 (AEEVWGDEQSDFTCNTQQPGCENVCYDRAFP) the chain is on the extracellular side. 3 cysteine pairs are disulfide-bonded: Cys54-Cys198, Cys61-Cys192, and Cys65-Cys187. Residues 72 to 92 (ISHIRFWALQIIFVSTPTLIY) traverse the membrane as a helical segment. The Cytoplasmic segment spans residues 93-158 (LGHVLHIVRM…GALLRTYVFN (66 aa)). Over residues 110-128 (EEELLRRDNPQHGRGREPM) the composition is skewed to basic and acidic residues. The interval 110 to 141 (EEELLRRDNPQHGRGREPMRTGSPRDPPLRDD) is disordered. The chain crosses the membrane as a helical span at residues 159–179 (IIFKTLFEVGFIAGQYFLYGF). Over 180–207 (QLQPLYRCDRWPCPNTVDCFISRPTEKT) the chain is Extracellular. The chain crosses the membrane as a helical span at residues 208–228 (IFVIFMLAVACASLVLNMLEI). The Cytoplasmic segment spans residues 229–416 (YHLGWKKLKQ…GRARPGDLAI (188 aa)). The tract at residues 336–416 (GAEPQTPASK…GRARPGDLAI (81 aa)) is disordered. Positions 342 to 353 (PASKPSSAASSP) are enriched in low complexity.

This sequence belongs to the connexin family. Alpha-type (group II) subfamily. In terms of assembly, a hemichannel or connexon is composed of a hexamer of connexins. A functional gap junction is formed by the apposition of two hemichannels. Forms heteromeric channels with GJA8. As to expression, detected in eye lens (at protein level). Most abundant in lens, but also present in heart and kidney.

It localises to the cell membrane. The protein resides in the cell junction. Its subcellular location is the gap junction. In terms of biological role, structural component of lens fiber gap junctions. Gap junctions are dodecameric channels that connect the cytoplasm of adjoining cells. They are formed by the docking of two hexameric hemichannels, one from each cell membrane. Small molecules and ions diffuse from one cell to a neighboring cell via the central pore. This is Gap junction alpha-3 protein (Gja3) from Rattus norvegicus (Rat).